The sequence spans 296 residues: Ribosomal protein L11 methyltransferase (296 aa).

The S-adenosyl-L-methionine site is built by threonine 151, glycine 172, aspartate 194, and asparagine 233.

It belongs to the methyltransferase superfamily. PrmA family.

The protein resides in the cytoplasm. The catalysed reaction is L-lysyl-[protein] + 3 S-adenosyl-L-methionine = N(6),N(6),N(6)-trimethyl-L-lysyl-[protein] + 3 S-adenosyl-L-homocysteine + 3 H(+). Functionally, methylates ribosomal protein L11. This is Ribosomal protein L11 methyltransferase from Thiobacillus denitrificans (strain ATCC 25259 / T1).